The following is a 324-amino-acid chain: Ribosomal RNA small subunit methyltransferase H (324 aa).

S-adenosyl-L-methionine is bound by residues 41–43 (GGH), D60, Y87, D111, and Q118.

It belongs to the methyltransferase superfamily. RsmH family.

It is found in the cytoplasm. It catalyses the reaction cytidine(1402) in 16S rRNA + S-adenosyl-L-methionine = N(4)-methylcytidine(1402) in 16S rRNA + S-adenosyl-L-homocysteine + H(+). In terms of biological role, specifically methylates the N4 position of cytidine in position 1402 (C1402) of 16S rRNA. This Nocardia farcinica (strain IFM 10152) protein is Ribosomal RNA small subunit methyltransferase H.